Reading from the N-terminus, the 101-residue chain is Gastrin (101 aa).

An N-terminal signal peptide occupies residues 1–21; it reads MQRLCVYVLIFALALAAFSEA. The segment at 22 to 82 is disordered; sequence SWKPRSQQPD…SKKQGPWLEE (61 aa). Residue Gln-59 is modified to Pyrrolidone carboxylic acid; in form big gastrin. Residue Gln-76 is modified to Pyrrolidone carboxylic acid; in form gastrin. A Sulfotyrosine; partial modification is found at Tyr-87. Phe-92 is subject to Phenylalanine amide. Ser-96 is subject to Phosphoserine. The propeptide at 96 to 101 is removed in mature form; it reads SAEDEN.

Belongs to the gastrin/cholecystokinin family. In terms of processing, two different processing pathways probably exist in antral G-cells. In the dominant pathway progastrin is cleaved at three sites resulting in two major bioactive gastrins, gastrin-34 and gastrin-17. In the putative alternative pathway, progastrin may be processed only at the most C-terminal dibasic site resulting in the synthesis of gastrin-71. Sulfation enhances proteolytic processing, and blocks peptide degradation. Levels of sulfation differ between proteolytically-cleaved gastrins. Thus, gastrin-6 is almost 73% sulfated, whereas the larger gastrins are less than 50% sulfated. Sulfation levels are also tissue-specific.

It is found in the secreted. Its function is as follows. Gastrin stimulates the stomach mucosa to produce and secrete hydrochloric acid and the pancreas to secrete its digestive enzymes. It also stimulates smooth muscle contraction and increases blood circulation and water secretion in the stomach and intestine. The chain is Gastrin (GAST) from Homo sapiens (Human).